Reading from the N-terminus, the 232-residue chain is Anti-sigma-K factor RskA (232 aa).

The Cytoplasmic segment spans residues Met1–Thr91. Residues Ala92–Leu112 traverse the membrane as a helical segment. At Thr113–Arg232 the chain is on the extracellular side.

The protein belongs to the anti-sigma-K factor family.

Its subcellular location is the cell membrane. Its function is as follows. An anti-sigma factor for extracytoplasmic function (ECF) sigma factor SigK. ECF sigma factors are held in an inactive form by an anti-sigma factor until released by regulated intramembrane proteolysis (RIP). RIP occurs when an extracytoplasmic signal triggers a concerted proteolytic cascade to transmit information and elicit cellular responses. The membrane-spanning regulatory substrate protein is first cut extracytoplasmically (site-1 protease, S1P), then within the membrane itself (site-2 protease, S2P, Rip1), while cytoplasmic proteases finish degrading the regulatory protein, liberating the sigma factor. This is Anti-sigma-K factor RskA (rskA) from Mycobacterium ulcerans (strain Agy99).